The chain runs to 219 residues: Elongation factor Ts (219 aa).

Residues 82–85 form an involved in Mg(2+) ion dislocation from EF-Tu region; it reads TDFV.

Belongs to the EF-Ts family.

It localises to the cytoplasm. Its function is as follows. Associates with the EF-Tu.GDP complex and induces the exchange of GDP to GTP. It remains bound to the aminoacyl-tRNA.EF-Tu.GTP complex up to the GTP hydrolysis stage on the ribosome. The chain is Elongation factor Ts from Anaeromyxobacter dehalogenans (strain 2CP-C).